The sequence spans 421 residues: Zinc metalloproteinase-disintegrin-like lachestatin-1 (421 aa).

The region spanning 10–206 (KYVKLVLVAD…DMPQCILEKP (197 aa)) is the Peptidase M12B domain. Cystine bridges form between C121/C201, C161/C185, and C163/C168. H146 is a Zn(2+) binding site. The active site involves E147. Positions 150 and 156 each coordinate Zn(2+). The Disintegrin domain occupies 214-299 (PPVCGNYFVE…AECTDRFQRN (86 aa)). V216, N219, F221, E223, E226, and D229 together coordinate Ca(2+). 14 disulfide bridges follow: C217–C246, C228–C241, C230–C236, C240–C263, C254–C260, C259–C285, C272–C292, C279–C310, C303–C315, C322–C372, C337–C383, C350–C360, C367–C409, and C403–C414. Residues 278-280 (ECD) carry the D/ECD-tripeptide motif. 5 residues coordinate Ca(2+): D280, M281, D283, D294, and R295. An N-linked (GlcNAc...) asparagine glycan is attached at N312.

Belongs to the venom metalloproteinase (M12B) family. P-III subfamily. P-IIIc sub-subfamily. In terms of assembly, homodimer; disulfide-linked. Zn(2+) serves as cofactor. In terms of tissue distribution, expressed by the venom gland.

Its subcellular location is the secreted. Snake venom zinc metalloprotease that induces apoptosis in vascular endothelial cells (VEC), without degrading the extracellular matrix (it cannot cleave collagen) or inhibiting adhesion of VEC. Has also fibrinogenolytic and hemorrhagic activities. In Lachesis muta rhombeata (Bushmaster), this protein is Zinc metalloproteinase-disintegrin-like lachestatin-1.